We begin with the raw amino-acid sequence, 273 residues long: Large ribosomal subunit protein uL2 (273 aa).

Positions 224 to 260 are disordered; sequence AMNPVDHPHGGGEGKTSGGRHPVTPWGKKTKGKKTRK. The span at 251–260 shows a compositional bias: basic residues; it reads KKTKGKKTRK.

The protein belongs to the universal ribosomal protein uL2 family. In terms of assembly, part of the 50S ribosomal subunit. Forms a bridge to the 30S subunit in the 70S ribosome.

One of the primary rRNA binding proteins. Required for association of the 30S and 50S subunits to form the 70S ribosome, for tRNA binding and peptide bond formation. It has been suggested to have peptidyltransferase activity; this is somewhat controversial. Makes several contacts with the 16S rRNA in the 70S ribosome. The sequence is that of Large ribosomal subunit protein uL2 from Orientia tsutsugamushi (strain Ikeda) (Rickettsia tsutsugamushi).